A 348-amino-acid polypeptide reads, in one-letter code: Dihydroorotase (348 aa).

Positions 14 and 16 each coordinate Zn(2+). Substrate contacts are provided by residues 16–18 (HLR) and N42. The Zn(2+) site is built by K100, H137, and H175. K100 is subject to N6-carboxylysine. H137 is a substrate binding site. L220 serves as a coordination point for substrate. D248 serves as a coordination point for Zn(2+). D248 is an active-site residue. Residues H252 and A264 each coordinate substrate.

It belongs to the metallo-dependent hydrolases superfamily. DHOase family. Class II DHOase subfamily. As to quaternary structure, homodimer. It depends on Zn(2+) as a cofactor.

The enzyme catalyses (S)-dihydroorotate + H2O = N-carbamoyl-L-aspartate + H(+). It functions in the pathway pyrimidine metabolism; UMP biosynthesis via de novo pathway; (S)-dihydroorotate from bicarbonate: step 3/3. Functionally, catalyzes the reversible cyclization of carbamoyl aspartate to dihydroorotate. The protein is Dihydroorotase of Pseudomonas entomophila (strain L48).